The sequence spans 544 residues: Prolyl 4-hydroxylase subunit alpha-3 (544 aa).

An N-terminal signal peptide occupies residues 1–19 (MGPAARLAALLAVLAFRAG). Residues 107–131 (LEASENIRALKDGYERVEQDLPAFE) adopt a coiled-coil conformation. One copy of the TPR repeat lies at 227–260 (EDALDHLAFAYFQAGNVLCALNLSREFLLYSPDN). N-linked (GlcNAc...) asparagine glycosylation is present at N248. The 108-residue stretch at 422–529 (YAEYLQVVNY…KWVANKWIHE (108 aa)) folds into the Fe2OG dioxygenase domain. Positions 440 and 442 each coordinate Fe cation. N482 is a glycosylation site (N-linked (GlcNAc...) asparagine). Fe cation is bound at residue H510. K520 serves as a coordination point for 2-oxoglutarate.

The protein belongs to the P4HA family. In terms of assembly, heterotetramer of two alpha-3 chains and two beta chains (the beta chain is the multi-functional PDI). The cofactor is Fe(2+). L-ascorbate is required as a cofactor. In terms of processing, N-glycosylation plays no role in the catalytic activity.

It is found in the endoplasmic reticulum lumen. It carries out the reaction L-prolyl-[collagen] + 2-oxoglutarate + O2 = trans-4-hydroxy-L-prolyl-[collagen] + succinate + CO2. In terms of biological role, catalyzes the post-translational formation of 4-hydroxyproline in -Xaa-Pro-Gly- sequences in collagens and other proteins. This chain is Prolyl 4-hydroxylase subunit alpha-3 (P4HA3), found in Bos taurus (Bovine).